The sequence spans 371 residues: Putative glutamate--cysteine ligase 2 (371 aa).

This sequence belongs to the glutamate--cysteine ligase type 2 family. YbdK subfamily.

It carries out the reaction L-cysteine + L-glutamate + ATP = gamma-L-glutamyl-L-cysteine + ADP + phosphate + H(+). ATP-dependent carboxylate-amine ligase which exhibits weak glutamate--cysteine ligase activity. The protein is Putative glutamate--cysteine ligase 2 of Cupriavidus taiwanensis (strain DSM 17343 / BCRC 17206 / CCUG 44338 / CIP 107171 / LMG 19424 / R1) (Ralstonia taiwanensis (strain LMG 19424)).